Here is a 276-residue protein sequence, read N- to C-terminus: Undecaprenyl-diphosphatase 2 (276 aa).

Helical transmembrane passes span 1–21, 44–64, 87–107, 114–134, 150–170, 190–210, 222–242, and 251–271; these read MSLW…LFPV, QLLP…LWYF, GHLM…GLLL, VFHD…LLWL, MTFK…IPGF, AAEF…VLEL, DALL…RFLM, and LASF…WFML.

This sequence belongs to the UppP family.

It is found in the cell inner membrane. The enzyme catalyses di-trans,octa-cis-undecaprenyl diphosphate + H2O = di-trans,octa-cis-undecaprenyl phosphate + phosphate + H(+). Its function is as follows. Catalyzes the dephosphorylation of undecaprenyl diphosphate (UPP). Confers resistance to bacitracin. The sequence is that of Undecaprenyl-diphosphatase 2 from Burkholderia lata (strain ATCC 17760 / DSM 23089 / LMG 22485 / NCIMB 9086 / R18194 / 383).